Reading from the N-terminus, the 270-residue chain is Acetylglutamate kinase (270 aa).

Substrate contacts are provided by residues 53–54 (GG), Arg75, and Asn167.

This sequence belongs to the acetylglutamate kinase family. ArgB subfamily.

Its subcellular location is the cytoplasm. The enzyme catalyses N-acetyl-L-glutamate + ATP = N-acetyl-L-glutamyl 5-phosphate + ADP. It functions in the pathway amino-acid biosynthesis; L-arginine biosynthesis; N(2)-acetyl-L-ornithine from L-glutamate: step 2/4. Its function is as follows. Catalyzes the ATP-dependent phosphorylation of N-acetyl-L-glutamate. This is Acetylglutamate kinase from Shewanella halifaxensis (strain HAW-EB4).